The chain runs to 201 residues: Nucleoid occlusion factor SlmA (201 aa).

An HTH tetR-type domain is found at 14 to 75 (KERQQQVLEV…ALIERIEMTL (62 aa)). Positions 38 to 57 (TTERLSKAVGVSEGALYRYF) form a DNA-binding region, H-T-H motif.

Belongs to the nucleoid occlusion factor SlmA family. In terms of assembly, homodimer. Interacts with FtsZ.

The protein localises to the cytoplasm. It is found in the nucleoid. Required for nucleoid occlusion (NO) phenomenon, which prevents Z-ring formation and cell division over the nucleoid. Acts as a DNA-associated cell division inhibitor that binds simultaneously chromosomal DNA and FtsZ, and disrupts the assembly of FtsZ polymers. SlmA-DNA-binding sequences (SBS) are dispersed on non-Ter regions of the chromosome, preventing FtsZ polymerization at these regions. This chain is Nucleoid occlusion factor SlmA, found in Glaesserella parasuis serovar 5 (strain SH0165) (Haemophilus parasuis).